The primary structure comprises 142 residues: uncharacterized protein (142 aa).

Positions 1 to 14 (MKNVSPRRNKHYKS) are enriched in basic residues. The disordered stretch occupies residues 1 to 40 (MKNVSPRRNKHYKSYKPQVPLKKPVLLPQHPPYRNRRKKK). Over residues 16–28 (KPQVPLKKPVLLP) the composition is skewed to low complexity.

This is an uncharacterized protein from Aquifex aeolicus (strain VF5).